The following is a 196-amino-acid chain: Probable malonic semialdehyde reductase RutE (196 aa).

Belongs to the nitroreductase family. HadB/RutE subfamily. It depends on FMN as a cofactor.

It carries out the reaction 3-hydroxypropanoate + NADP(+) = 3-oxopropanoate + NADPH + H(+). Functionally, may reduce toxic product malonic semialdehyde to 3-hydroxypropionic acid, which is excreted. The polypeptide is Probable malonic semialdehyde reductase RutE (Escherichia coli (strain K12 / MC4100 / BW2952)).